A 401-amino-acid chain; its full sequence is Exodeoxyribonuclease 7 large subunit (401 aa).

This sequence belongs to the XseA family. In terms of assembly, heterooligomer composed of large and small subunits.

The protein resides in the cytoplasm. It carries out the reaction Exonucleolytic cleavage in either 5'- to 3'- or 3'- to 5'-direction to yield nucleoside 5'-phosphates.. Its function is as follows. Bidirectionally degrades single-stranded DNA into large acid-insoluble oligonucleotides, which are then degraded further into small acid-soluble oligonucleotides. In Lachnoclostridium phytofermentans (strain ATCC 700394 / DSM 18823 / ISDg) (Clostridium phytofermentans), this protein is Exodeoxyribonuclease 7 large subunit.